The sequence spans 428 residues: Adenylosuccinate synthetase (428 aa).

GTP is bound by residues 12–18 and 40–42; these read GDEGKGK and GHT. D13 serves as the catalytic Proton acceptor. Residues D13 and G40 each coordinate Mg(2+). IMP contacts are provided by residues 13-16, 38-41, T130, R144, Q225, T240, and R304; these read DEGK and NAGH. The active-site Proton donor is the H41. 300 to 306 contributes to the substrate binding site; sequence VTTGRAR. Residues R306, 332 to 334, and 414 to 416 each bind GTP; these read KID and SVG.

This sequence belongs to the adenylosuccinate synthetase family. As to quaternary structure, homodimer. Requires Mg(2+) as cofactor.

The protein localises to the cytoplasm. The catalysed reaction is IMP + L-aspartate + GTP = N(6)-(1,2-dicarboxyethyl)-AMP + GDP + phosphate + 2 H(+). The protein operates within purine metabolism; AMP biosynthesis via de novo pathway; AMP from IMP: step 1/2. Functionally, plays an important role in the de novo pathway of purine nucleotide biosynthesis. Catalyzes the first committed step in the biosynthesis of AMP from IMP. The chain is Adenylosuccinate synthetase from Clostridium acetobutylicum (strain ATCC 824 / DSM 792 / JCM 1419 / IAM 19013 / LMG 5710 / NBRC 13948 / NRRL B-527 / VKM B-1787 / 2291 / W).